We begin with the raw amino-acid sequence, 243 residues long: Ras-related protein Rab-12 (243 aa).

N-acetylmethionine is present on M1. A disordered region spans residues M1–R36. A phosphoserine mark is found at S20 and S24. The GTP site is built by G51, V52, G53, K54, T55, S72, and T73. A Mg(2+)-binding site is contributed by T55. 2 consecutive short sequence motifs (switch) follow at residues D64–F78 and D96–S113. T73 and D96 together coordinate Mg(2+). G99 is a binding site for GTP. S105 bears the Phosphoserine mark. GTP-binding residues include N154, K155, D157, S185, A186, and K187. S-geranylgeranyl cysteine attachment occurs at residues C242 and C243.

The protein belongs to the small GTPase superfamily. Rab family. Interacts with RABIF and OPTN. Interacts with LRRK2; interaction facilitates phosphorylation of Ser-105. Interacts with GDI1, GDI2 and CHM; these interactions are disrupted by phosphorylation on Ser-105. Interacts with RILPL1 and RILPL2; these interactions are dependent on phosphorylation of Ser-105. Mg(2+) is required as a cofactor. Post-translationally, phosphorylation of Ser-105 in the switch II region by LRRK2 prevents the association of RAB regulatory proteins, including CHM and RAB GDP dissociation inhibitors GDI1 and GDI2. As to expression, highest levels in skeletal and cardiac muscle. Also found in comparable amounts in brain, spinal cord and lung. Also detected in testis where it is expressed by Sertoli cells of the seminiferous tubules (at protein level).

It is found in the recycling endosome membrane. It localises to the lysosome membrane. The protein localises to the golgi apparatus membrane. The protein resides in the cytoplasmic vesicle. Its subcellular location is the autophagosome. It catalyses the reaction GTP + H2O = GDP + phosphate + H(+). Its activity is regulated as follows. Regulated by guanine nucleotide exchange factors (GEFs) including DENND3 which promote the exchange of bound GDP for free GTP. Regulated by GTPase activating proteins (GAPs) which increase the GTP hydrolysis activity. Inhibited by GDP dissociation inhibitors (GDIs). Its function is as follows. The small GTPases Rab are key regulators of intracellular membrane trafficking, from the formation of transport vesicles to their fusion with membranes. Rabs cycle between an inactive GDP-bound form and an active GTP-bound form that is able to recruit to membranes different sets of downstream effectors directly responsible for vesicle formation, movement, tethering and fusion. RAB12 may play a role in protein transport from recycling endosomes to lysosomes regulating, for instance, the degradation of the transferrin receptor. Involved in autophagy. The chain is Ras-related protein Rab-12 from Rattus norvegicus (Rat).